The sequence spans 526 residues: Meiotically up-regulated gene 99 protein, mitochondrial (526 aa).

2 consecutive transmembrane segments (helical) span residues 398–418 (TLYTTAFQGLGALGSLYLYFV) and 421–441 (FSLYNAFSVFSVCGVFGLYYL).

It is found in the mitochondrion membrane. Required for correct meiotic chromosome segregation. Appears to also have role in sporulation. In Schizosaccharomyces pombe (strain 972 / ATCC 24843) (Fission yeast), this protein is Meiotically up-regulated gene 99 protein, mitochondrial (mug99).